We begin with the raw amino-acid sequence, 938 residues long: MSSLTILLQRACLRFALLPVPPLRAPLRPPRRPLGLPRRSAMSSSAASRLSHIVAAAGGAAGESSEPPAAAAAASGLAQEDDDLSSAMMGYRLPPKEIQDIVDAPPLPVLSFSPSKDKILFLKRRALPPLSDLAKPEEKLAGVRIDGYSNTRSRMSFYTGIGIHKLMDDGTLGPEKVVHGYPEGARINFVTWSQDGRHLSFSVRVDEEDNTSGKLRLWIADVESGEARPLFKSPEIYLNAIFDSFVWVNNSTLLVCTIPLSRGAPPQKPSVPSGPKIQSNETSNVVQVRTFQDLLKDEYDADLFDYYATSQLVLASFDGTVKPIGPPAVYTSIDPSPDDKYLMISSIHRPYSYIVPCGRFPKKVELWTVDGEFIRELCDLPLAEDIPIATSSVRKGKRSIYWRPDKPAMLYWVETQDGGDAKVEVSPRDIVYMENAEPINGEQPEILHKLDLRYAGTSWCDESLALVYESWYKTRKTRTWVISPDKKDVSPRILFDRSSEDVYSDPGSPMLRRTAMGTYVIAKVKKQDENTYILLNGMGATPEGNVPFLDLFDINTGSKERIWQSDKEKYYETVVALMSDKTDGELPLEKLKILTSKESKTENTQYYLQIWPEKKQVQITDFPHPYPQLASLYKEMIRYQRKDGVQLTATLYLPPGYDPSQDGPLPCLVWSYPGEFKSKDAAGQVRGSPNEFPGIGATSPLLWLARGFAILSGPTIPIIGEGDEEANDRYVEQLVTSAEAAAEEVVRRGVAHPDKIAVGGHSYGAFMTANLLAHAPHLFCCGIARSGAYNRTLTPFGFQNEDRTLWEATNTYVEMSPFMSANKIKKPILLIHGEQDNNSGTLTMQSDRFFNALKGHGALSRLVILPFESHGYSARESIMHVLWETDRWLQKYCLSGSSKTDSDSVADTENKTVSASGGGAPCEGPEAEGFSSMQRSLL.

The transit peptide at 1 to 54 (MSSLTILLQRACLRFALLPVPPLRAPLRPPRRPLGLPRRSAMSSSAASRLSHIV) directs the protein to the chloroplast. Positions 58 to 76 (GGAAGESSEPPAAAAAASG) are enriched in low complexity. The tract at residues 58–77 (GGAAGESSEPPAAAAAASGL) is disordered. Catalysis depends on charge relay system residues serine 762, aspartate 836, and histidine 870. Positions 897–913 (SSKTDSDSVADTENKTV) are enriched in polar residues. The tract at residues 897–938 (SSKTDSDSVADTENKTVSASGGGAPCEGPEAEGFSSMQRSLL) is disordered.

Belongs to the peptidase S9D family.

It localises to the plastid. The protein resides in the chloroplast stroma. Its function is as follows. Serine-type protease active in vitro against the LHCII N-terminal. Cleaves its substrate on the carboxy-side of Glu residues. The chain is Probable glutamyl endopeptidase, chloroplastic (GEP) from Oryza sativa subsp. japonica (Rice).